Here is a 186-residue protein sequence, read N- to C-terminus: Ribosome-recycling factor (186 aa).

The disordered stretch occupies residues 140–163 (LKKAEKDGDIGQDEGRSLSERVQK).

Belongs to the RRF family.

Its subcellular location is the cytoplasm. Responsible for the release of ribosomes from messenger RNA at the termination of protein biosynthesis. May increase the efficiency of translation by recycling ribosomes from one round of translation to another. In Rhizobium rhizogenes (strain K84 / ATCC BAA-868) (Agrobacterium radiobacter), this protein is Ribosome-recycling factor.